Reading from the N-terminus, the 133-residue chain is Exonuclease VapC9 (133 aa).

One can recognise a PINc domain in the interval 5–113 (YLVDASALYA…LVLVTQDREL (109 aa)). The Mg(2+) site is built by Asp-8, Asp-92, and Asp-110.

It belongs to the PINc/VapC protein family. As to quaternary structure, homodimer, 2 of which then form a homotetramer. The cofactor is Mg(2+).

Inhibited by EDTA. Functionally, toxic component of a type II toxin-antitoxin (TA) system. Its function is as follows. Has ribonuclease activity. Has a slow ssDNA exonuclease activity. The sequence is that of Exonuclease VapC9 from Pyrobaculum aerophilum (strain ATCC 51768 / DSM 7523 / JCM 9630 / CIP 104966 / NBRC 100827 / IM2).